The primary structure comprises 332 residues: Adenosine deaminase (332 aa).

Residues His-12 and His-14 each coordinate Zn(2+). His-14, Asp-16, and Gly-170 together coordinate substrate. His-197 is a binding site for Zn(2+). Residue Glu-200 is the Proton donor of the active site. Asp-278 serves as a coordination point for Zn(2+).

This sequence belongs to the metallo-dependent hydrolases superfamily. Adenosine and AMP deaminases family. Adenosine deaminase subfamily. Zn(2+) is required as a cofactor.

It catalyses the reaction adenosine + H2O + H(+) = inosine + NH4(+). The enzyme catalyses 2'-deoxyadenosine + H2O + H(+) = 2'-deoxyinosine + NH4(+). Functionally, catalyzes the hydrolytic deamination of adenosine and 2-deoxyadenosine. The polypeptide is Adenosine deaminase (Clostridium perfringens (strain SM101 / Type A)).